The sequence spans 394 residues: Phosphopentomutase (394 aa).

6 residues coordinate Mn(2+): D14, D287, H292, D328, H329, and H340.

This sequence belongs to the phosphopentomutase family. It depends on Mn(2+) as a cofactor.

It localises to the cytoplasm. The catalysed reaction is 2-deoxy-alpha-D-ribose 1-phosphate = 2-deoxy-D-ribose 5-phosphate. It carries out the reaction alpha-D-ribose 1-phosphate = D-ribose 5-phosphate. Its pathway is carbohydrate degradation; 2-deoxy-D-ribose 1-phosphate degradation; D-glyceraldehyde 3-phosphate and acetaldehyde from 2-deoxy-alpha-D-ribose 1-phosphate: step 1/2. Isomerase that catalyzes the conversion of deoxy-ribose 1-phosphate (dRib-1-P) and ribose 1-phosphate (Rib-1-P) to deoxy-ribose 5-phosphate (dRib-5-P) and ribose 5-phosphate (Rib-5-P), respectively. In Listeria monocytogenes serovar 1/2a (strain ATCC BAA-679 / EGD-e), this protein is Phosphopentomutase.